The following is a 312-amino-acid chain: Olfactory receptor 2M5 (312 aa).

Residues 1–25 lie on the Extracellular side of the membrane; sequence MAWENQTFNSDFILLGIFNHSPTHT. An N-linked (GlcNAc...) asparagine glycan is attached at N5. The chain crosses the membrane as a helical span at residues 26 to 49; that stretch reads FLFFLVLAIFSVAFMGNSVMVLLI. At 50 to 57 the chain is on the cytoplasmic side; the sequence is YLDTQLHT. Residues 58-79 traverse the membrane as a helical segment; it reads PMYFLLSQLFLMDLMLICSTVP. Topologically, residues 80–100 are extracellular; sequence KMAFNYLSGSKSISMAGCATQ. A disulfide bond links C97 and C189. Residues 101–120 form a helical membrane-spanning segment; the sequence is IFFYVSLLGSECFLLAVMSY. Residues 121–139 lie on the Cytoplasmic side of the membrane; sequence DRYIAICHPLRYTNLMRPK. Residues 140–158 form a helical membrane-spanning segment; it reads ICGLMTAFSWILGSMDAII. Over 159 to 195 the chain is Extracellular; it reads DAVATFSFSYCGSREIAHFFCDFPSLLILSCNDTSIF. The helical transmembrane segment at 196–219 threads the bilayer; sequence EKVLFICCIVMIVFPVAIIIASYA. Topologically, residues 220-236 are cytoplasmic; the sequence is RVILAVIHMGSGEGRRK. Residues 237–259 traverse the membrane as a helical segment; that stretch reads AFTTCSSHLMVVGMYYGAGLFMY. Topologically, residues 260-272 are extracellular; sequence IRPTSDRSPMQDK. A helical membrane pass occupies residues 273 to 292; the sequence is LVSVFYTILTPMLNPLIYSL. The Cytoplasmic segment spans residues 293–311; that stretch reads RNKEVTRALRKVLGKGKCG.

This sequence belongs to the G-protein coupled receptor 1 family.

The protein resides in the cell membrane. In terms of biological role, odorant receptor. In Homo sapiens (Human), this protein is Olfactory receptor 2M5 (OR2M5).